A 44-amino-acid chain; its full sequence is Mu-conotoxin-like Cal 12.1.3b (44 aa).

Cystine bridges form between Cys3/Cys16, Cys11/Cys28, Cys18/Cys33, and Cys27/Cys38. 4-hydroxyproline is present on Pro23. A 6'-bromotryptophan mark is found at Trp36 and Trp37. Pro39 bears the 4-hydroxyproline mark. Residue Trp43 is modified to 6'-bromotryptophan.

In terms of tissue distribution, expressed by the venom duct.

Its subcellular location is the secreted. Mu-conotoxins block voltage-gated sodium channels. This toxin reversibly blocks voltage-gated sodium channel in cephalopods, with no alteration in the voltage dependence of sodium conductance or on the kinetics of inactivation. The sequence is that of Mu-conotoxin-like Cal 12.1.3b from Californiconus californicus (California cone).